The primary structure comprises 508 residues: Anthranilate synthase component 1 (508 aa).

L-tryptophan is bound by residues Ser-51 and 283–285; that span reads PYM. 323–324 contacts chorismate; that stretch reads GT. Glu-350 serves as a coordination point for Mg(2+). Chorismate contacts are provided by residues Tyr-438, Arg-458, 477 to 479, and Gly-479; that span reads GAG. Glu-492 provides a ligand contact to Mg(2+).

The protein belongs to the anthranilate synthase component I family. In terms of assembly, heterotetramer consisting of two non-identical subunits: a beta subunit (TrpG) and a large alpha subunit (TrpE). Mg(2+) serves as cofactor.

It catalyses the reaction chorismate + L-glutamine = anthranilate + pyruvate + L-glutamate + H(+). It participates in amino-acid biosynthesis; L-tryptophan biosynthesis; L-tryptophan from chorismate: step 1/5. Feedback inhibited by tryptophan. Functionally, part of a heterotetrameric complex that catalyzes the two-step biosynthesis of anthranilate, an intermediate in the biosynthesis of L-tryptophan. In the first step, the glutamine-binding beta subunit (TrpG) of anthranilate synthase (AS) provides the glutamine amidotransferase activity which generates ammonia as a substrate that, along with chorismate, is used in the second step, catalyzed by the large alpha subunit of AS (TrpE) to produce anthranilate. In the absence of TrpG, TrpE can synthesize anthranilate directly from chorismate and high concentrations of ammonia. This chain is Anthranilate synthase component 1 (trpE), found in Synechocystis sp. (strain ATCC 27184 / PCC 6803 / Kazusa).